Consider the following 1574-residue polypeptide: Sterol 3-beta-glucosyltransferase (1574 aa).

Polar residues predominate over residues 37–48 (TFLNQNPASPNN). 2 disordered regions span residues 37–61 (TFLN…NKDE) and 102–170 (ASNA…HSKL). 2 stretches are compositionally biased toward basic and acidic residues: residues 107 to 121 (EAKD…RSSR) and 128 to 138 (PEYRREYKLDY). Residues 139–148 (DIDESEEDDI) are compositionally biased toward acidic residues. Positions 149-170 (ESTRDENTLKPKTEDTSVHSKL) are enriched in basic and acidic residues. The 36-residue stretch at 253–288 (DKLKRVFELNDDDYFYGNYNVWLVRDVLLQGHIYLT) folds into the GRAM 1 domain. Residues 323–471 (DVIQSGSLGM…WVNNIVKVVF (149 aa)) form the PH domain. 4 disordered regions span residues 389 to 413 (GRND…SGDE), 538 to 559 (RMKK…GNEP), 651 to 722 (ASHR…PVQG), and 774 to 806 (DALS…KKKN). The span at 692 to 701 (ITPSKIFSNK) shows a compositional bias: polar residues. Positions 702–711 (SRTESEKSTP) are enriched in basic and acidic residues. A compositionally biased stretch (polar residues) spans 712 to 722 (DRSQTTSPVQG). One can recognise a GRAM 2 domain in the interval 854-920 (RHFQERFSFN…IDVDTCSKEK (67 aa)). A compositionally biased stretch (basic and acidic residues) spans 964–976 (RESGNESSDDNKS). The tract at residues 964-996 (RESGNESSDDNKSAQHGKSGCFQKTPSSAETTK) is disordered. The span at 985 to 996 (FQKTPSSAETTK) shows a compositional bias: polar residues. 12 residues coordinate UDP-alpha-D-glucose: S1057, R1058, D1060, N1333, I1364, H1366, H1379, S1382, G1383, T1384, D1403, and Q1404. A disordered region spans residues 1505–1574 (DSDTYDADHD…DNTTVTDANK (70 aa)). Positions 1510–1533 (DADHDSDKESDHDQTYEQDNHSDY) are enriched in basic and acidic residues. A compositionally biased stretch (polar residues) spans 1563 to 1574 (GNDNTTVTDANK).

It belongs to the glycosyltransferase 28 family.

Its subcellular location is the cytoplasm. The protein localises to the membrane. It catalyses the reaction a sterol + UDP-alpha-D-glucose = a sterol 3-beta-D-glucoside + UDP + H(+). It carries out the reaction ergosterol + UDP-alpha-D-glucose = ergosteryl 3-beta-D-glucoside + UDP + H(+). In terms of biological role, sterol glycosyltransferase responsible for the glycosylation of ergosterol to form ergosterol-glucoside. The polypeptide is Sterol 3-beta-glucosyltransferase (Debaryomyces hansenii (strain ATCC 36239 / CBS 767 / BCRC 21394 / JCM 1990 / NBRC 0083 / IGC 2968) (Yeast)).